The primary structure comprises 426 residues: Bifunctional protein GlmU (426 aa).

A pyrophosphorylase region spans residues 1–216; that stretch reads MSEVDVVILA…WHDILGVNTQ (216 aa). UDP-N-acetyl-alpha-D-glucosamine-binding positions include 9-12, lysine 23, and glutamine 69; that span reads LAAG. Position 97 (aspartate 97) interacts with Mg(2+). Residues glycine 132, glutamate 148, asparagine 163, and asparagine 214 each coordinate UDP-N-acetyl-alpha-D-glucosamine. Asparagine 214 contacts Mg(2+). The linker stretch occupies residues 217-237; it reads QQLAAVSKIARKRINDQIMAN. The interval 238–426 is N-acetyltransferase; the sequence is GVTMIDPLTT…AKHDQRDDQP (189 aa). Residues arginine 286 and lysine 304 each coordinate UDP-N-acetyl-alpha-D-glucosamine. Histidine 316 (proton acceptor) is an active-site residue. Residues tyrosine 319 and asparagine 330 each contribute to the UDP-N-acetyl-alpha-D-glucosamine site. Acetyl-CoA-binding positions include alanine 333, 339–340, serine 358, alanine 376, and arginine 393; that span reads NY.

The protein in the N-terminal section; belongs to the N-acetylglucosamine-1-phosphate uridyltransferase family. It in the C-terminal section; belongs to the transferase hexapeptide repeat family. As to quaternary structure, homotrimer. The cofactor is Mg(2+).

It localises to the cytoplasm. The catalysed reaction is alpha-D-glucosamine 1-phosphate + acetyl-CoA = N-acetyl-alpha-D-glucosamine 1-phosphate + CoA + H(+). It catalyses the reaction N-acetyl-alpha-D-glucosamine 1-phosphate + UTP + H(+) = UDP-N-acetyl-alpha-D-glucosamine + diphosphate. It participates in nucleotide-sugar biosynthesis; UDP-N-acetyl-alpha-D-glucosamine biosynthesis; N-acetyl-alpha-D-glucosamine 1-phosphate from alpha-D-glucosamine 6-phosphate (route II): step 2/2. Its pathway is nucleotide-sugar biosynthesis; UDP-N-acetyl-alpha-D-glucosamine biosynthesis; UDP-N-acetyl-alpha-D-glucosamine from N-acetyl-alpha-D-glucosamine 1-phosphate: step 1/1. The protein operates within bacterial outer membrane biogenesis; LPS lipid A biosynthesis. Catalyzes the last two sequential reactions in the de novo biosynthetic pathway for UDP-N-acetylglucosamine (UDP-GlcNAc). The C-terminal domain catalyzes the transfer of acetyl group from acetyl coenzyme A to glucosamine-1-phosphate (GlcN-1-P) to produce N-acetylglucosamine-1-phosphate (GlcNAc-1-P), which is converted into UDP-GlcNAc by the transfer of uridine 5-monophosphate (from uridine 5-triphosphate), a reaction catalyzed by the N-terminal domain. The sequence is that of Bifunctional protein GlmU from Oenococcus oeni (strain ATCC BAA-331 / PSU-1).